A 177-amino-acid chain; its full sequence is Parathyroid hormone-related protein (177 aa).

Residues 1 to 24 (MLWRLVQQWSVAVFLLSYSVPSCG) form the signal peptide. The propeptide occupies 25 to 34 (RSVEELGRRL). Residues 57–68 (RFFLHHLIAEIH) are important for receptor binding. The segment at 74–149 (ATSEVSPNSK…KRRTRSAWLT (76 aa)) is disordered. Over residues 76 to 90 (SEVSPNSKPAPNTKN) the composition is skewed to polar residues. The Nuclear localization signal signature appears at 108 to 129 (TNKVETYKEQPLKTPGKKKKSK). A compositionally biased stretch (basic and acidic residues) spans 109 to 118 (NKVETYKEQP). Positions 122-132 (PGKKKKSKPGK) are enriched in basic residues.

It belongs to the parathyroid hormone family. As to quaternary structure, PTHrP interacts with PTH1R (via N-terminal extracellular domain). Post-translationally, there are several secretory forms, including osteostatin, arising from endoproteolytic cleavage of the initial translation product. Each of these secretory forms is believed to have one or more of its own receptors that mediates the normal paracrine, autocrine and endocrine actions.

Its subcellular location is the secreted. The protein localises to the cytoplasm. The protein resides in the nucleus. In terms of biological role, neuroendocrine peptide which is a critical regulator of cellular and organ growth, development, migration, differentiation and survival and of epithelial calcium ion transport. Acts by binding to its receptor, PTH1R, activating G protein-coupled receptor signaling. Regulates endochondral bone development and epithelial-mesenchymal interactions during the formation of the mammary glands and teeth. Required for skeletal homeostasis. Promotes mammary mesenchyme differentiation and bud outgrowth by modulating mesenchymal cell responsiveness to BMPs. Up-regulates BMPR1A expression in the mammary mesenchyme and this increases the sensitivity of these cells to BMPs and allows them to respond to BMP4 in a paracrine and/or autocrine fashion. BMP4 signaling in the mesenchyme, in turn, triggers epithelial outgrowth and augments MSX2 expression, which causes the mammary mesenchyme to inhibit hair follicle formation within the nipple sheath. Potent inhibitor of osteoclastic bone resorption. The sequence is that of Parathyroid hormone-related protein (PTHLH) from Bos taurus (Bovine).